Reading from the N-terminus, the 314-residue chain is Methionyl-tRNA formyltransferase (314 aa).

Ser110–Pro113 provides a ligand contact to (6S)-5,6,7,8-tetrahydrofolate.

This sequence belongs to the Fmt family.

It carries out the reaction L-methionyl-tRNA(fMet) + (6R)-10-formyltetrahydrofolate = N-formyl-L-methionyl-tRNA(fMet) + (6S)-5,6,7,8-tetrahydrofolate + H(+). Attaches a formyl group to the free amino group of methionyl-tRNA(fMet). The formyl group appears to play a dual role in the initiator identity of N-formylmethionyl-tRNA by promoting its recognition by IF2 and preventing the misappropriation of this tRNA by the elongation apparatus. This is Methionyl-tRNA formyltransferase from Bacillus cytotoxicus (strain DSM 22905 / CIP 110041 / 391-98 / NVH 391-98).